Here is a 116-residue protein sequence, read N- to C-terminus: Ribonuclease P protein component (116 aa).

Belongs to the RnpA family. As to quaternary structure, consists of a catalytic RNA component (M1 or rnpB) and a protein subunit.

The catalysed reaction is Endonucleolytic cleavage of RNA, removing 5'-extranucleotides from tRNA precursor.. RNaseP catalyzes the removal of the 5'-leader sequence from pre-tRNA to produce the mature 5'-terminus. It can also cleave other RNA substrates such as 4.5S RNA. The protein component plays an auxiliary but essential role in vivo by binding to the 5'-leader sequence and broadening the substrate specificity of the ribozyme. The protein is Ribonuclease P protein component of Citrifermentans bemidjiense (strain ATCC BAA-1014 / DSM 16622 / JCM 12645 / Bem) (Geobacter bemidjiensis).